Here is a 499-residue protein sequence, read N- to C-terminus: Cytochrome P450 705A12 (499 aa).

The chain crosses the membrane as a helical span at residues 4–24 (LIIVDFQNISIFILLCLFSFL). C439 is a binding site for heme.

Belongs to the cytochrome P450 family. The cofactor is heme.

Its subcellular location is the membrane. Its function is as follows. May be involved in hydroxylation of the triterpene marneral. This Arabidopsis thaliana (Mouse-ear cress) protein is Cytochrome P450 705A12.